Reading from the N-terminus, the 488-residue chain is N-acyl-D-glutamate deacylase (488 aa).

This sequence belongs to the metallo-dependent hydrolases superfamily. N-acyl-D-amino-acid deacylase family. Zn(2+) serves as cofactor.

It is found in the cytoplasm. It carries out the reaction an N-acyl-D-glutamate + H2O = D-glutamate + a carboxylate. Its activity is regulated as follows. Inhibited by cobalt, copper and EDTA. This chain is N-acyl-D-glutamate deacylase, found in Alcaligenes xylosoxydans xylosoxydans (Achromobacter xylosoxidans).